The sequence spans 134 residues: Large ribosomal subunit protein eL32 (134 aa).

Belongs to the eukaryotic ribosomal protein eL32 family.

The sequence is that of Large ribosomal subunit protein eL32 (RpL32) from Spodoptera frugiperda (Fall armyworm).